A 438-amino-acid polypeptide reads, in one-letter code: Enolase (438 aa).

Gln174 provides a ligand contact to (2R)-2-phosphoglycerate. Glu216 (proton donor) is an active-site residue. Positions 253, 297, and 324 each coordinate Mg(2+). 4 residues coordinate (2R)-2-phosphoglycerate: Lys349, Arg378, Ser379, and Lys400. The active-site Proton acceptor is Lys349.

Belongs to the enolase family. Component of the RNA degradosome, a multiprotein complex involved in RNA processing and mRNA degradation. The cofactor is Mg(2+).

The protein localises to the cytoplasm. It localises to the secreted. The protein resides in the cell surface. It carries out the reaction (2R)-2-phosphoglycerate = phosphoenolpyruvate + H2O. It functions in the pathway carbohydrate degradation; glycolysis; pyruvate from D-glyceraldehyde 3-phosphate: step 4/5. Its function is as follows. Catalyzes the reversible conversion of 2-phosphoglycerate (2-PG) into phosphoenolpyruvate (PEP). It is essential for the degradation of carbohydrates via glycolysis. This Psychrobacter sp. (strain PRwf-1) protein is Enolase.